The sequence spans 364 residues: DNA replication and repair protein RecF (364 aa).

30–37 provides a ligand contact to ATP; that stretch reads GNNGQGKT.

This sequence belongs to the RecF family.

The protein localises to the cytoplasm. The RecF protein is involved in DNA metabolism; it is required for DNA replication and normal SOS inducibility. RecF binds preferentially to single-stranded, linear DNA. It also seems to bind ATP. The chain is DNA replication and repair protein RecF from Geotalea daltonii (strain DSM 22248 / JCM 15807 / FRC-32) (Geobacter daltonii).